Consider the following 259-residue polypeptide: 2,3-dihydroxy-2,3-dihydro-p-cumate dehydrogenase (259 aa).

An NAD(+)-binding site is contributed by 18 to 42 (VTGGAHGIGLGIVERLLGLGARVTA). Tyr-163 functions as the Proton acceptor in the catalytic mechanism.

Belongs to the short-chain dehydrogenases/reductases (SDR) family.

It carries out the reaction (2R,3S)-2,3-dihydroxy-2,3-dihydro-p-cumate + NAD(+) = 2,3-dihydroxy-p-cumate + NADH + H(+). Its pathway is aromatic compound metabolism; p-cumate degradation; acetaldehyde and pyruvate from p-cumate: step 2/7. In Pseudomonas putida (strain ATCC 700007 / DSM 6899 / JCM 31910 / BCRC 17059 / LMG 24140 / F1), this protein is 2,3-dihydroxy-2,3-dihydro-p-cumate dehydrogenase (cmtB).